The sequence spans 458 residues: Elongation factor 1-alpha (458 aa).

Position 2 is a n,N,N-trimethylglycine (Gly2). Lys3 is subject to N6,N6-dimethyllysine; alternate. An N6-methyllysine; alternate modification is found at Lys3. One can recognise a tr-type G domain in the interval Lys5–Thr240. Residues Gly14 to Ser21 are G1. Gly14–Ser21 contributes to the GTP binding site. Position 30 is an N6-methyllysine (Lys30). The tract at residues Gly70 to Asp74 is G2. Lys79 carries the N6,N6,N6-trimethyllysine modification. The tract at residues Asp91–Gly94 is G3. Residues Asp91 to His95 and Asn153 to Asp156 contribute to the GTP site. Residues Asn153 to Asp156 are G4. A G5 region spans residues Ser192–Trp194. The residue at position 316 (Lys316) is an N6,N6-dimethyllysine; alternate. Lys316 carries the N6-methyllysine; alternate modification. Lys390 bears the N6-methyllysine mark.

The protein belongs to the TRAFAC class translation factor GTPase superfamily. Classic translation factor GTPase family. EF-Tu/EF-1A subfamily.

It is found in the cytoplasm. It functions in the pathway protein biosynthesis; polypeptide chain elongation. Functionally, this protein promotes the GTP-dependent binding of aminoacyl-tRNA to the A-site of ribosomes during protein biosynthesis. The polypeptide is Elongation factor 1-alpha (TEF1) (Meyerozyma guilliermondii (strain ATCC 6260 / CBS 566 / DSM 6381 / JCM 1539 / NBRC 10279 / NRRL Y-324) (Yeast)).